The primary structure comprises 653 residues: ATP-dependent rRNA helicase SPB4 (653 aa).

A Q motif motif is present at residues 17–45 (WQALTPPLSEWILDAVAAMGFTRMTPVQA). The region spanning 48-257 (IPLFMGHKDV…RVGLRNPVKI (210 aa)) is the Helicase ATP-binding domain. Position 61 to 68 (61 to 68 (AVTGSGKT)) interacts with ATP. Positions 205–208 (DEAD) match the DEAD box motif. The 154-residue stretch at 291–444 (AIRQILNSID…SPPVALSDTL (154 aa)) folds into the Helicase C-terminal domain. Residues 534 to 653 (KQREKHRQES…DGESEFEGFD (120 aa)) are disordered. Residues 558–569 (PSSSSNNDTAPW) are compositionally biased toward polar residues. A coiled-coil region spans residues 571-627 (KTLEKKSDKEKRRERKRAKKEREHWEKMTEEEKTKSRETHQMLEELRKKNRQELNAK). Basic and acidic residues-rich tracts occupy residues 572-581 (TLEKKSDKEK) and 590-626 (KERE…ELNA). Over residues 627 to 636 (KSHTSSSVLS) the composition is skewed to polar residues. Positions 641-653 (AELDGESEFEGFD) are enriched in acidic residues.

Belongs to the DEAD box helicase family. DDX55/SPB4 subfamily. In terms of assembly, component of pre-60S ribosomal complexes.

Its subcellular location is the nucleus. The protein localises to the nucleolus. It catalyses the reaction ATP + H2O = ADP + phosphate + H(+). Its function is as follows. ATP-binding RNA helicase involved in the biogenesis of 60S ribosomal subunits. Binds 90S pre-ribosomal particles and dissociates from pre-60S ribosomal particles after processing of 27SB pre-rRNA. Required for the normal formation of 18S rRNA through the processing of pre-rRNAs at sites A0, A1 and A2, and the normal formation of 25S and 5.8S rRNAs through the processing of pre-rRNAs at sites C1 and C2. The protein is ATP-dependent rRNA helicase SPB4 of Coccidioides immitis (strain RS) (Valley fever fungus).